The primary structure comprises 177 residues: ATP synthase subunit delta (177 aa).

It belongs to the ATPase delta chain family. As to quaternary structure, F-type ATPases have 2 components, F(1) - the catalytic core - and F(0) - the membrane proton channel. F(1) has five subunits: alpha(3), beta(3), gamma(1), delta(1), epsilon(1). F(0) has three main subunits: a(1), b(2) and c(10-14). The alpha and beta chains form an alternating ring which encloses part of the gamma chain. F(1) is attached to F(0) by a central stalk formed by the gamma and epsilon chains, while a peripheral stalk is formed by the delta and b chains.

It localises to the cell inner membrane. F(1)F(0) ATP synthase produces ATP from ADP in the presence of a proton or sodium gradient. F-type ATPases consist of two structural domains, F(1) containing the extramembraneous catalytic core and F(0) containing the membrane proton channel, linked together by a central stalk and a peripheral stalk. During catalysis, ATP synthesis in the catalytic domain of F(1) is coupled via a rotary mechanism of the central stalk subunits to proton translocation. Functionally, this protein is part of the stalk that links CF(0) to CF(1). It either transmits conformational changes from CF(0) to CF(1) or is implicated in proton conduction. The polypeptide is ATP synthase subunit delta (Colwellia psychrerythraea (strain 34H / ATCC BAA-681) (Vibrio psychroerythus)).